The chain runs to 338 residues: Taste receptor type 2 member 39 (338 aa).

Residues 1–30 lie on the Extracellular side of the membrane; it reads MLGRCFPPDTKEKQQLRMTKLCDPAESELS. A helical membrane pass occupies residues 31 to 51; the sequence is PFLITLILAVLLAEYLIGIIA. Residues 52–74 are Cytoplasmic-facing; sequence NGFIMAIHAAEWVQNKAVSTSGR. Residues 75–95 form a helical membrane-spanning segment; that stretch reads ILVFLSVSRIALQSLMMLEIT. Residues 96-116 are Extracellular-facing; sequence ISSTSLSFYSEDAVYYAFKIS. The chain crosses the membrane as a helical span at residues 117-137; it reads FIFLNFCSLWFAAWLSFFYFV. The Cytoplasmic segment spans residues 138-156; that stretch reads KIANFSYPLFLKLRWRITG. The chain crosses the membrane as a helical span at residues 157 to 177; sequence LIPWLLWLSVFISFSHSMFCI. Topologically, residues 178–205 are extracellular; sequence NICTVYCNNSFPIHSSNSTKKTYLSEIN. 2 N-linked (GlcNAc...) asparagine glycosylation sites follow: asparagine 185 and asparagine 194. Residues 206-226 traverse the membrane as a helical segment; that stretch reads VVGLAFFFNLGIVTPLIMFIL. Over 227-262 the chain is Cytoplasmic; that stretch reads TATLLILSLKRHTLHMGSNATGSNDPSMEAHMGAIK. The helical transmembrane segment at 263–283 threads the bilayer; that stretch reads AISYFLILYIFNAVALFIYLS. Topologically, residues 284 to 291 are extracellular; that stretch reads NMFDINSL. The chain crosses the membrane as a helical span at residues 292–312; it reads WNNLCQIIMAAYPAGHSILPI. The Cytoplasmic portion of the chain corresponds to 313 to 338; sequence QDNPGLRRAWKRLQLRLHLYPKEWTL.

The protein belongs to the G-protein coupled receptor T2R family.

It localises to the membrane. In terms of biological role, receptor that may play a role in the perception of bitterness and is gustducin-linked. May play a role in sensing the chemical composition of the gastrointestinal content. The activity of this receptor may stimulate alpha gustducin, mediate PLC-beta-2 activation and lead to the gating of TRPM5. The polypeptide is Taste receptor type 2 member 39 (TAS2R39) (Pan paniscus (Pygmy chimpanzee)).